A 274-amino-acid chain; its full sequence is Diaminopimelate epimerase (274 aa).

Substrate contacts are provided by Asn11, Gln44, and Asn64. Cys73 serves as the catalytic Proton donor. Residues 74-75, Asn157, Asn190, and 208-209 each bind substrate; these read GN and ER. Catalysis depends on Cys217, which acts as the Proton acceptor. 218-219 contacts substrate; that stretch reads GS.

This sequence belongs to the diaminopimelate epimerase family. Homodimer.

The protein localises to the cytoplasm. The enzyme catalyses (2S,6S)-2,6-diaminopimelate = meso-2,6-diaminopimelate. It functions in the pathway amino-acid biosynthesis; L-lysine biosynthesis via DAP pathway; DL-2,6-diaminopimelate from LL-2,6-diaminopimelate: step 1/1. Catalyzes the stereoinversion of LL-2,6-diaminopimelate (L,L-DAP) to meso-diaminopimelate (meso-DAP), a precursor of L-lysine and an essential component of the bacterial peptidoglycan. This is Diaminopimelate epimerase from Yersinia pseudotuberculosis serotype O:1b (strain IP 31758).